The chain runs to 414 residues: GA-binding protein subunit beta-2 (414 aa).

ANK repeat units follow at residues 5 to 34 (DLGK…PFTT), 37 to 66 (LGTS…SRDA), 70 to 99 (VDRT…DVNA), 103 to 132 (LQMT…DVYA), and 136 to 166 (FDKS…QVNT). At S218 the chain carries Phosphoserine. Positions 310 to 362 (EEMKEGSERELLQQQLQEANRRAQEYRHQLLKKEQEAEQYRLRLEAMAQQQTN) form a coiled coil.

In terms of assembly, heterotetramer of two alpha and two beta subunits. The C-terminal is necessary for the formation of a heterotetrameric GABP-alpha-2/beta-2 complex, and also facilitates homotypic dimerization. Interacts with ADGRB2. In terms of tissue distribution, high levels in thymus, spleen, kidney and intestine.

It is found in the nucleus. Functionally, transcription factor capable of interacting with purine rich repeats (GA repeats). Must associate with GABP-alpha to bind DNA. This is GA-binding protein subunit beta-2 (Gabpb2) from Mus musculus (Mouse).